Consider the following 304-residue polypeptide: Secreted mono- and diacylglycerol lipase MDL2 (304 aa).

Positions 1–19 are cleaved as a signal peptide; it reads MILGRTISLFLGCSALVSG. Cysteine 55 and cysteine 297 are joined by a disulfide. 2 N-linked (GlcNAc...) asparagine glycosylation sites follow: asparagine 102 and asparagine 161. The Nucleophile role is filled by serine 171. Aspartate 228 is an active-site residue. An N-linked (GlcNAc...) asparagine glycan is attached at asparagine 253. Histidine 281 is an active-site residue.

Belongs to the AB hydrolase superfamily. Lipase family. Class 3 subfamily.

The protein localises to the secreted. It localises to the cell wall. The enzyme catalyses a monoacylglycerol + H2O = glycerol + a fatty acid + H(+). The catalysed reaction is a diacylglycerol + H2O = a monoacylglycerol + a fatty acid + H(+). Its function is as follows. Secreted lipase involved in Dandruff and seborrheic dermatitis (D/SD) probably via lipase-mediated breakdown of sebaceous lipids and release of irritating free fatty acids. Shows activity against monoglyceride and diglyceride substrates, but not triglyceride substrates and does not exhibit regio-selective production of diacylglycerols. Hydrolyzes both 1,2- and 1,3-diacylglycerols. Also hydrolyzes distearin, dilinolein and dipalmitolein. Cleaves oleic acid from 1,2 isomers of diolein on both the 1 and the 2 position of the glycerol backbone, resulting mainly in free fatty acids but no monoolein is detected. Shows activity on monoolein and liberates mostly free fatty acids, but can also perform the reverse reaction and produce diolein. The polypeptide is Secreted mono- and diacylglycerol lipase MDL2 (Malassezia globosa (strain ATCC MYA-4612 / CBS 7966) (Dandruff-associated fungus)).